The following is a 291-amino-acid chain: Small ribosomal subunit biogenesis GTPase RsgA 2 (291 aa).

The 159-residue stretch at 63 to 221 (ENALVRPPVA…VADTPGFSSI (159 aa)) folds into the CP-type G domain. Residues 112–115 (SKMD) and 164–172 (GQSGVGKST) each bind GTP. Zn(2+) contacts are provided by Cys-245, Cys-250, His-252, and Cys-258.

Belongs to the TRAFAC class YlqF/YawG GTPase family. RsgA subfamily. As to quaternary structure, monomer. Associates with 30S ribosomal subunit, binds 16S rRNA. Zn(2+) serves as cofactor.

The protein resides in the cytoplasm. Its function is as follows. One of several proteins that assist in the late maturation steps of the functional core of the 30S ribosomal subunit. Helps release RbfA from mature subunits. May play a role in the assembly of ribosomal proteins into the subunit. Circularly permuted GTPase that catalyzes slow GTP hydrolysis, GTPase activity is stimulated by the 30S ribosomal subunit. This Listeria monocytogenes serovar 1/2a (strain ATCC BAA-679 / EGD-e) protein is Small ribosomal subunit biogenesis GTPase RsgA 2.